We begin with the raw amino-acid sequence, 141 residues long: NTDQSFPGFPGSEMWNPNTDLSEDCLYLNVWIPTPKPKNATVMIWIYGGGFQTGTSSLPVYDGKFLARVERVIVVSVNYRVGALGFLALPGNPEAPGNLGLFDQQLALQWVQKNIAAFGGNPKSVTLFGESAGAGSVGLHL.

A glycan (N-linked (GlcNAc...) asparagine) is linked at Asn-39. 49–50 is a binding site for substrate; it reads GG. Residue Ser-131 is the Acyl-ester intermediate of the active site. Position 131 is a phosphoserine (Ser-131).

This sequence belongs to the type-B carboxylesterase/lipase family. Homotetramer; disulfide-linked. Dimer of dimers. Present in most cells except erythrocytes.

It is found in the secreted. It catalyses the reaction an acylcholine + H2O = a carboxylate + choline + H(+). In terms of biological role, esterase with broad substrate specificity. Contributes to the inactivation of the neurotransmitter acetylcholine. Can degrade neurotoxic organophosphate esters. The sequence is that of Cholinesterase (BCHE) from Canis lupus familiaris (Dog).